Reading from the N-terminus, the 309-residue chain is Ribonuclease Z (309 aa).

Positions 61, 63, 65, 66, 144, 212, and 271 each coordinate Zn(2+). D65 functions as the Proton acceptor in the catalytic mechanism.

Belongs to the RNase Z family. Homodimer. The cofactor is Zn(2+).

The enzyme catalyses Endonucleolytic cleavage of RNA, removing extra 3' nucleotides from tRNA precursor, generating 3' termini of tRNAs. A 3'-hydroxy group is left at the tRNA terminus and a 5'-phosphoryl group is left at the trailer molecule.. In terms of biological role, zinc phosphodiesterase, which displays some tRNA 3'-processing endonuclease activity. Probably involved in tRNA maturation, by removing a 3'-trailer from precursor tRNA. The protein is Ribonuclease Z of Clostridium acetobutylicum (strain ATCC 824 / DSM 792 / JCM 1419 / IAM 19013 / LMG 5710 / NBRC 13948 / NRRL B-527 / VKM B-1787 / 2291 / W).